Reading from the N-terminus, the 339-residue chain is Annexin A2 (339 aa).

An N-acetylserine modification is found at Ser-2. The S100A10-binding site stretch occupies residues 2 to 24 (STVHEILCKLSLEGDHSTPPSAY). Tyr-24 bears the Phosphotyrosine; by SRC mark. Ser-26 is subject to Phosphoserine; by PKC. 2 Annexin repeats span residues 33 to 104 (FDAE…GLLK) and 105 to 176 (TPAQ…ALAK). At Lys-49 the chain carries N6-acetyllysine; alternate. Residue Lys-49 forms a Glycyl lysine isopeptide (Lys-Gly) (interchain with G-Cter in SUMO1); alternate linkage. Lys-49 participates in a covalent cross-link: Glycyl lysine isopeptide (Lys-Gly) (interchain with G-Cter in SUMO2); alternate. An N6-acetyllysine modification is found at Lys-152. Residue Ser-184 is modified to Phosphoserine. Annexin repeat units lie at residues 189–261 (ELID…NLVQ) and 265–336 (NKPL…YLCG). Tyr-199 carries the post-translational modification Phosphotyrosine. An N6-acetyllysine modification is found at Lys-227.

It belongs to the annexin family. As to quaternary structure, heterotetramer containing 2 light chains of S100A10/p11 and 2 heavy chains of ANXA2/p36. Interacts with ATP1B1. Interacts with DYSF. Interacts with COCH. Interacts (via repeat Annexin 1) with PCSK9 (via the C-terminal domain); the interaction inhibits the degradation of LDLR. Interacts with CEACAM1 (via the cytoplasmic domain); this interaction is regulated by phosphorylation of CEACAM1. Interacts with APPL2 and APPL1; targets APPL2 to endosomes and acting in parallel to RAB5A. Interacts with S100A4. May interact with UBAP2. Interacts with PLEKHG4B; this interaction is required for PLEKHG4B localization to cell-cell adhesions. (Microbial infection) Interacts with human cytomegalovirus (HCMV). In terms of assembly, (Microbial infection) Interacts with M.pneumoniae CARDS toxin; CARDS probably uses this protein as a receptor. A portion of internalized CARDS remains associated with intracellular annexin 2. Post-translationally, phosphorylation of Tyr-24 enhances heat stress-induced translocation to the cell surface. ISGylated.

It localises to the secreted. The protein localises to the extracellular space. The protein resides in the extracellular matrix. Its subcellular location is the basement membrane. It is found in the melanosome. Functionally, calcium-regulated membrane-binding protein whose affinity for calcium is greatly enhanced by anionic phospholipids. It binds two calcium ions with high affinity. May be involved in heat-stress response. Inhibits PCSK9-enhanced LDLR degradation, probably reduces PCSK9 protein levels via a translational mechanism but also competes with LDLR for binding with PCSK9. Binds to endosomes damaged by phagocytosis of particulate wear debris and participates in endosomal membrane stabilization, thereby limiting NLRP3 inflammasome activation. Required for endothelial cell surface plasmin generation and may support fibrinolytic surveillance and neoangiogenesis. In terms of biological role, (Microbial infection) Binds M.pneumoniae CARDS toxin, probably serves as one receptor for this pathogen. When ANXA2 is down-regulated by siRNA, less toxin binds to human cells and less vacuolization (a symptom of M.pneumoniae infection) is seen. This chain is Annexin A2 (ANXA2), found in Homo sapiens (Human).